The primary structure comprises 176 residues: Ribosome maturation factor RimM (176 aa).

Residues 100–173 form the PRC barrel domain; sequence EGEFHLLDLV…WLRLTPPPGL (74 aa).

The protein belongs to the RimM family. Binds ribosomal protein uS19.

It localises to the cytoplasm. Its function is as follows. An accessory protein needed during the final step in the assembly of 30S ribosomal subunit, possibly for assembly of the head region. Essential for efficient processing of 16S rRNA. May be needed both before and after RbfA during the maturation of 16S rRNA. It has affinity for free ribosomal 30S subunits but not for 70S ribosomes. The sequence is that of Ribosome maturation factor RimM from Prochlorococcus marinus (strain MIT 9303).